Consider the following 325-residue polypeptide: Putative HTH-type transcriptional regulatory protein HQ_3058A (325 aa).

One can recognise an HTH cro/C1-type domain in the interval 132-186 (LADEREERGWSLGRLATELGVSRRTVSKYEDGMNASIEIAIQLEEVFDEPFSSPL). The segment at residues 143-162 (LGRLATELGVSRRTVSKYED) is a DNA-binding region (H-T-H motif). The interval 189–211 (MEGAESVRDSEPTPDDPDPDADD) is disordered. A compositionally biased stretch (acidic residues) spans 200-211 (PTPDDPDPDADD).

This Haloquadratum walsbyi (strain DSM 16790 / HBSQ001) protein is Putative HTH-type transcriptional regulatory protein HQ_3058A.